The following is a 188-amino-acid chain: MKKIGVLAIQGAVDEHIQMIESAGALAFKVKHSSDLDGLDGLVLPGGESTTMRKIMKRYDLMEPIRAFASEGKAIFGTCAGLVLLSKEIEGGEESLGLIEATAIRNGFGRQKESFEAELNVEAFGEPAFEAIFIRAPYLIEPSNEVAVLATVENRIVAAKQANILVTAFHPELTNDNRWMNYFLEKMV.

47–49 (GES) contacts L-glutamine. Catalysis depends on cysteine 79, which acts as the Nucleophile. L-glutamine contacts are provided by residues arginine 105 and 134 to 135 (IR). Residues histidine 170 and glutamate 172 each act as charge relay system in the active site.

The protein belongs to the glutaminase PdxT/SNO family. As to quaternary structure, in the presence of PdxS, forms a dodecamer of heterodimers. Only shows activity in the heterodimer.

The enzyme catalyses aldehydo-D-ribose 5-phosphate + D-glyceraldehyde 3-phosphate + L-glutamine = pyridoxal 5'-phosphate + L-glutamate + phosphate + 3 H2O + H(+). It catalyses the reaction L-glutamine + H2O = L-glutamate + NH4(+). The protein operates within cofactor biosynthesis; pyridoxal 5'-phosphate biosynthesis. Catalyzes the hydrolysis of glutamine to glutamate and ammonia as part of the biosynthesis of pyridoxal 5'-phosphate. The resulting ammonia molecule is channeled to the active site of PdxS. The sequence is that of Pyridoxal 5'-phosphate synthase subunit PdxT from Listeria monocytogenes serotype 4b (strain F2365).